The following is a 76-amino-acid chain: Probable insulin-like peptide alpha-type 3 (76 aa).

A signal peptide spans 1–18 (MFVLLIILSIILAQVTDA). Intrachain disulfides connect Cys-28–Cys-58, Cys-40–Cys-71, and Cys-46–Cys-72.

The protein belongs to the insulin family.

Its subcellular location is the secreted. In Caenorhabditis elegans, this protein is Probable insulin-like peptide alpha-type 3 (ins-23).